The primary structure comprises 20 residues: Fibrinogen (20 aa).

The 20-residue stretch at 1 to 20 (LHSNLEYQYRYSGRVASGIP) folds into the Vitellogenin domain.

Secreted into the hemolymph.

It localises to the secreted. It is found in the extracellular space. In terms of biological role, involved in lipid transport. Plays a role in hemolymph clotting. May be involved in wound healing in the cuticle. This Pacifastacus leniusculus (Signal crayfish) protein is Fibrinogen.